Consider the following 448-residue polypeptide: Trk system potassium uptake protein TrkA homolog 1 (448 aa).

Residues 1-124 enclose the RCK N-terminal 1 domain; that stretch reads MKAVIIGAGE…RAQVGVDLMI (124 aa). Residues 7-11, aspartate 29, 70-71, and arginine 101 contribute to the NAD(+) site; these read GAGEV and TG. An RCK C-terminal 1 domain is found at 144–225; it reads IDAEMFAEGK…MEDLESVFGS (82 aa). The region spanning 230 to 348 is the RCK N-terminal 2 domain; sequence RTRILLIGCG…FEMVGIDMAV (119 aa). Position 232–262 (232–262) interacts with NAD(+); sequence RILLIGCGIVGMYLAKLIDKEENADLRIIEH. Residues 368–448 form the RCK C-terminal 2 domain; sequence QTLTTIEGER…AASEVEKYFK (81 aa).

Functionally, part of a potassium transport system. The polypeptide is Trk system potassium uptake protein TrkA homolog 1 (trkA1) (Methanosarcina mazei (strain ATCC BAA-159 / DSM 3647 / Goe1 / Go1 / JCM 11833 / OCM 88) (Methanosarcina frisia)).